Consider the following 246-residue polypeptide: Salivary antigen SP32 (246 aa).

A signal peptide spans 1–23 (MSGHILTVGLIVVVAHCATLSSS). Residues 51-160 (DKFYPDISDD…PDLSKYKNSP (110 aa)) are disordered. The segment covering 65–78 (VVRDNGRKGGDRGR) has biased composition (basic and acidic residues). Polar residues predominate over residues 79–124 (QSTPSGKESHPSATQTGGRRPSQSPCGESRPSGSATSGRRPSQSPR). Basic and acidic residues predominate over residues 141–155 (QQDRRQNKKQPDLSK).

As to quaternary structure, interacts with human DSG1. Interacts with human DSG3. As to expression, salivary gland (at protein level).

Its subcellular location is the secreted. Its function is as follows. Down-regulates the expression of CD86 and HLA-DR on the surface of lipopolysaccharide (LPS)-stimulated human peripheral blood mononuclear cells (PBMCs). Reduces LPS-induced secretion of IL-1beta/IL1B in human PBMCs. Reduces LPS-induced secretion of various cytokines, such as IL-1beta, TNF-alpha/TNF, MCP-1/CCL2, IL6, IL27 and IL-1alpha/IL1A, in host cultured macrophages probably via inhibition of NF-kappa-B signaling pathway. Reduces production of IFN-gamma/IFNG, IL4 and IL6 in human lymphocytes activated with PMA/ionomycin. Exhibits anti-inflammatory activity in carrageenan-induced paw edema model in rats. The polypeptide is Salivary antigen SP32 (Phlebotomus papatasi (Sandfly)).